Here is a 389-residue protein sequence, read N- to C-terminus: Succinate--CoA ligase [ADP-forming] subunit beta (389 aa).

Residues 9–244 (KKLFADYGLP…LTQEDPREAE (236 aa)) form the ATP-grasp domain. ATP contacts are provided by residues lysine 46, 53–55 (GRG), glutamate 99, alanine 102, and glutamate 107. Positions 199 and 213 each coordinate Mg(2+). Residues asparagine 264 and 321-323 (GIV) contribute to the substrate site.

The protein belongs to the succinate/malate CoA ligase beta subunit family. In terms of assembly, heterotetramer of two alpha and two beta subunits. Mg(2+) serves as cofactor.

It catalyses the reaction succinate + ATP + CoA = succinyl-CoA + ADP + phosphate. It carries out the reaction GTP + succinate + CoA = succinyl-CoA + GDP + phosphate. It functions in the pathway carbohydrate metabolism; tricarboxylic acid cycle; succinate from succinyl-CoA (ligase route): step 1/1. Its function is as follows. Succinyl-CoA synthetase functions in the citric acid cycle (TCA), coupling the hydrolysis of succinyl-CoA to the synthesis of either ATP or GTP and thus represents the only step of substrate-level phosphorylation in the TCA. The beta subunit provides nucleotide specificity of the enzyme and binds the substrate succinate, while the binding sites for coenzyme A and phosphate are found in the alpha subunit. The protein is Succinate--CoA ligase [ADP-forming] subunit beta of Histophilus somni (strain 2336) (Haemophilus somnus).